A 565-amino-acid polypeptide reads, in one-letter code: Mediator of RNA polymerase II transcription subunit 17 (565 aa).

Positions 138 to 152 are enriched in polar residues; it reads TSLNSDRLGQDSNDN. The disordered stretch occupies residues 138-160; it reads TSLNSDRLGQDSNDNQESKATDS.

This sequence belongs to the Mediator complex subunit 17 family. As to quaternary structure, component of the Mediator complex.

It is found in the nucleus. In terms of biological role, component of the Mediator complex, a coactivator involved in the regulated transcription of nearly all RNA polymerase II-dependent genes. Mediator functions as a bridge to convey information from gene-specific regulatory proteins to the basal RNA polymerase II transcription machinery. Mediator is recruited to promoters by direct interactions with regulatory proteins and serves as a scaffold for the assembly of a functional preinitiation complex with RNA polymerase II and the general transcription factors. This Candida albicans (strain SC5314 / ATCC MYA-2876) (Yeast) protein is Mediator of RNA polymerase II transcription subunit 17 (SRB4).